Reading from the N-terminus, the 165-residue chain is Phosphopantetheine adenylyltransferase (165 aa).

Thr9 lines the substrate pocket. ATP contacts are provided by residues 9 to 10 and His17; that span reads TF. Substrate contacts are provided by Lys41, Leu78, and Arg92. Residues 93–95, Glu103, and 128–134 contribute to the ATP site; these read GLR and RQAIASK.

Belongs to the bacterial CoaD family. In terms of assembly, homohexamer. It depends on Mg(2+) as a cofactor.

Its subcellular location is the cytoplasm. It catalyses the reaction (R)-4'-phosphopantetheine + ATP + H(+) = 3'-dephospho-CoA + diphosphate. Its pathway is cofactor biosynthesis; coenzyme A biosynthesis; CoA from (R)-pantothenate: step 4/5. Functionally, reversibly transfers an adenylyl group from ATP to 4'-phosphopantetheine, yielding dephospho-CoA (dPCoA) and pyrophosphate. This Ruegeria pomeroyi (strain ATCC 700808 / DSM 15171 / DSS-3) (Silicibacter pomeroyi) protein is Phosphopantetheine adenylyltransferase.